The following is a 644-amino-acid chain: Sentrin-specific protease 1 (644 aa).

The interaction with CCAR2 stretch occupies residues 1-200 (MDDIADRMRM…REIYRQLLQM (200 aa)). 4 positions are modified to phosphoserine: Ser57, Ser117, Ser132, and Ser157. The segment at 92–117 (QSANGQWRNSTPSSSSSLQKSRNSRS) is disordered. Residues 99 to 117 (RNSTPSSSSSLQKSRNSRS) are compositionally biased toward low complexity. Disordered regions lie at residues 156 to 184 (PSPS…TAEE) and 283 to 312 (SKDS…NTQS). The short motif at 171–177 (PKKTQRR) is the Nuclear localization signal element. The tract at residues 450 to 613 (LTITRKDIQT…GMFACKYADC (164 aa)) is protease. Catalysis depends on residues His533 and Asp550. Residues 574–577 (KKRK) carry the Nuclear localization signal motif. The active-site Nucleophile is Cys603. The Nuclear localization signal signature appears at 628–634 (PYFRKRM). A Nuclear export signal motif is present at residues 635–644 (VWEILHRKLL).

Belongs to the peptidase C48 family. Interacts with RBM33; promoting ALKBH5 desumoylation and subsequent activation. In terms of tissue distribution, highly expressed in testis. Expressed at lower levels in thymus, pancreas, spleen, liver, ovary and small intestine.

It is found in the nucleus. Its subcellular location is the cytoplasm. Protease that catalyzes two essential functions in the SUMO pathway. The first is the hydrolysis of an alpha-linked peptide bond at the C-terminal end of the small ubiquitin-like modifier (SUMO) propeptides, SUMO1, SUMO2 and SUMO3 leading to the mature form of the proteins. The second is the deconjugation of SUMO1, SUMO2 and SUMO3 from targeted proteins, by cleaving an epsilon-linked peptide bond between the C-terminal glycine of the mature SUMO and the lysine epsilon-amino group of the target protein. Deconjugates SUMO1 from HIPK2. Deconjugates SUMO1 from HDAC1 and BHLHE40/DEC1, which decreases its transcriptional repression activity. Deconjugates SUMO1 from CLOCK, which decreases its transcriptional activation activity. Deconjugates SUMO2 from MTA1. Inhibits N(6)-methyladenosine (m6A) RNA methylation by mediating SUMO1 deconjugation from METTL3 and ALKBH5: METTL3 inhibits the m6A RNA methyltransferase activity, while ALKBH5 desumoylation promotes m6A demethylation. Desumoylates CCAR2 which decreases its interaction with SIRT1. Deconjugates SUMO1 from GPS2. The polypeptide is Sentrin-specific protease 1 (SENP1) (Homo sapiens (Human)).